A 189-amino-acid polypeptide reads, in one-letter code: Probable nicotinate-nucleotide adenylyltransferase (189 aa).

This sequence belongs to the NadD family.

The catalysed reaction is nicotinate beta-D-ribonucleotide + ATP + H(+) = deamido-NAD(+) + diphosphate. It participates in cofactor biosynthesis; NAD(+) biosynthesis; deamido-NAD(+) from nicotinate D-ribonucleotide: step 1/1. In terms of biological role, catalyzes the reversible adenylation of nicotinate mononucleotide (NaMN) to nicotinic acid adenine dinucleotide (NaAD). The polypeptide is Probable nicotinate-nucleotide adenylyltransferase (Bacillus cereus (strain AH820)).